The chain runs to 378 residues: Putative zinc finger protein C09F5.3 (378 aa).

The segment covering 1 to 14 has biased composition (basic residues); that stretch reads MRKTEKMKRPHNSS. Disordered regions lie at residues 1 to 36 and 61 to 80; these read MRKT…SKSI and TLSE…NSAP. Composition is skewed to basic and acidic residues over residues 16–26 and 62–71; these read VKQEERADDSH and LSEHVPEKKP. The C2H2-type 1 zinc-finger motif lies at 42-65; it reads LKCELCSTVCSSISQLQSHTLSEH. The C2H2-type 2; degenerate zinc finger occupies 85–107; the sequence is VACQQCEDTFEDFAQFAIHMKSH. Residues 204–226 form a C2H2-type 3; degenerate zinc finger; it reads YGCALCATSYPSQLHLITHVQMS. The segment at 231–250 is disordered; the sequence is TFYPPSLPIPTPPSPKSTPK. Over residues 235–246 the composition is skewed to pro residues; sequence PSLPIPTPPSPK. 4 consecutive C2H2-type zinc fingers follow at residues 254-277, 284-306, 312-334, and 355-377; these read LQCS…LRKH, DKCA…CLRH, HHCP…CAYH, and FVCP…TKIH.

Its subcellular location is the nucleus. The polypeptide is Putative zinc finger protein C09F5.3 (Caenorhabditis elegans).